Reading from the N-terminus, the 660-residue chain is Polyadenylation factor subunit 2 (660 aa).

Residues 1-12 (MSYEPRGDHDKG) are compositionally biased toward basic and acidic residues. The tract at residues 1-32 (MSYEPRGDHDKGYGGGGGHDGLPPRNRGRRPV) is disordered. WD repeat units lie at residues 94 to 133 (KIKH…FETI), 136 to 176 (AHDS…ESIR), 177 to 216 (GHTD…TDMT), 219 to 258 (GHGW…CLTT), 261 to 301 (GHKN…DIAL), 304 to 344 (GHEK…TAPD), and 376 to 415 (AHDF…EAPE). Residues 562–660 (KAGYQPPPPP…QSKGNYTRVR (99 aa)) form a disordered region. Over residues 566-610 (QPPPPPGSAGAPMPPPGILPPGLIPPPGAAGFPMPPPGFAPPPLI) the composition is skewed to pro residues.

Its subcellular location is the nucleus. Required for 3'-end cleavage and polyadenylation of pre-mRNAs. Also involved in chromosome segregation where it has a role in chromosome attachment to the mitotic spindle. The polypeptide is Polyadenylation factor subunit 2 (paa-1) (Neurospora crassa (strain ATCC 24698 / 74-OR23-1A / CBS 708.71 / DSM 1257 / FGSC 987)).